Reading from the N-terminus, the 557-residue chain is Formate--tetrahydrofolate ligase 2 (557 aa).

An ATP-binding site is contributed by 66 to 73; the sequence is TPAGEGKT.

It belongs to the formate--tetrahydrofolate ligase family.

The catalysed reaction is (6S)-5,6,7,8-tetrahydrofolate + formate + ATP = (6R)-10-formyltetrahydrofolate + ADP + phosphate. It participates in one-carbon metabolism; tetrahydrofolate interconversion. The protein is Formate--tetrahydrofolate ligase 2 of Streptococcus pyogenes serotype M5 (strain Manfredo).